We begin with the raw amino-acid sequence, 217 residues long: Thiopurine S-methyltransferase (217 aa).

4 residues coordinate S-adenosyl-L-methionine: tryptophan 11, leucine 46, glutamate 67, and arginine 122.

The protein belongs to the class I-like SAM-binding methyltransferase superfamily. TPMT family.

The protein localises to the cytoplasm. The enzyme catalyses S-adenosyl-L-methionine + a thiopurine = S-adenosyl-L-homocysteine + a thiopurine S-methylether.. This chain is Thiopurine S-methyltransferase, found in Vibrio atlanticus (strain LGP32) (Vibrio splendidus (strain Mel32)).